A 1127-amino-acid chain; its full sequence is Structural protein MDM1 (1127 aa).

The PXA domain occupies Asn85–Gln273. Residues Ser670, Ser673, and Ser692 each carry the phosphoserine modification. Residues Ser705 to Lys762 adopt a coiled-coil conformation. One can recognise a PX domain in the interval Thr782–Lys905.

The protein belongs to the sorting nexin family.

It is found in the cytoplasm. Functionally, essential for mitotic growth. Mediates organelle inheritance. This chain is Structural protein MDM1 (MDM1), found in Saccharomyces cerevisiae (strain ATCC 204508 / S288c) (Baker's yeast).